The primary structure comprises 204 residues: Methyl-CpG-binding domain protein 3-like 2B (204 aa).

A compositionally biased stretch (basic and acidic residues) spans 126–137; that stretch reads SLDRAGAERVRS. Positions 126 to 145 are disordered; sequence SLDRAGAERVRSPLEPTPGR.

The protein belongs to the MBD3L family.

This is Methyl-CpG-binding domain protein 3-like 2B from Homo sapiens (Human).